We begin with the raw amino-acid sequence, 267 residues long: Protein LicA (267 aa).

The protein belongs to the peptidase S49 family.

In terms of biological role, mediates phase variation of the LPS epitopes. Phase variation of H.influenza LPS epitopes expressed by LicA is determined by a translational switch. This chain is Protein LicA (licA), found in Haemophilus influenzae (strain ATCC 51907 / DSM 11121 / KW20 / Rd).